The following is a 301-amino-acid chain: Probable alpha-L-glutamate ligase 1 (301 aa).

Residues 104–287 form the ATP-grasp domain; sequence LQLLSRKGIG…VTEPIVEYIE (184 aa). ATP is bound by residues K141, 178–179, D187, and 211–213; these read EY and RSN. Residues D248, E260, and N262 each contribute to the Mg(2+) site. D248, E260, and N262 together coordinate Mn(2+).

It belongs to the RimK family. Requires Mg(2+) as cofactor. Mn(2+) serves as cofactor.

This Shewanella oneidensis (strain ATCC 700550 / JCM 31522 / CIP 106686 / LMG 19005 / NCIMB 14063 / MR-1) protein is Probable alpha-L-glutamate ligase 1.